The sequence spans 233 residues: Protein Mis18-alpha (233 aa).

Phosphoserine is present on residues serine 36, serine 39, and serine 40. The 99-residue stretch at 80–178 (PLVFLCSGCR…NVEAVESYVL (99 aa)) folds into the Mis18 domain. Residues cysteine 85, cysteine 88, cysteine 141, and cysteine 144 each contribute to the Zn(2+) site. Lysine 162 participates in a covalent cross-link: Glycyl lysine isopeptide (Lys-Gly) (interchain with G-Cter in SUMO2). A Phosphoserine modification is found at serine 233.

It belongs to the mis18 family. Homodimer, and heterodimer with OIP5/MIS18B. Identified in a complex containing MIS18A, OIP5/MIS18B, MIS18BP1, RBBP7 and RBBP4.

It is found in the nucleus. Its subcellular location is the chromosome. It localises to the centromere. Required for recruitment of CENPA to centromeres and normal chromosome segregation during mitosis. This is Protein Mis18-alpha (MIS18A) from Plecturocebus moloch (Dusky titi monkey).